Here is a 338-residue protein sequence, read N- to C-terminus: tRNA N6-adenosine threonylcarbamoyltransferase (338 aa).

2 residues coordinate Fe cation: His112 and His116. Substrate-binding positions include 135 to 139, Asp168, Gly181, and Asn273; that span reads LVSGG. Asp301 serves as a coordination point for Fe cation.

The protein belongs to the KAE1 / TsaD family. The cofactor is Fe(2+).

Its subcellular location is the cytoplasm. The catalysed reaction is L-threonylcarbamoyladenylate + adenosine(37) in tRNA = N(6)-L-threonylcarbamoyladenosine(37) in tRNA + AMP + H(+). In terms of biological role, required for the formation of a threonylcarbamoyl group on adenosine at position 37 (t(6)A37) in tRNAs that read codons beginning with adenine. Is involved in the transfer of the threonylcarbamoyl moiety of threonylcarbamoyl-AMP (TC-AMP) to the N6 group of A37, together with TsaE and TsaB. TsaD likely plays a direct catalytic role in this reaction. This Buchnera aphidicola subsp. Baizongia pistaciae (strain Bp) protein is tRNA N6-adenosine threonylcarbamoyltransferase.